The following is a 277-amino-acid chain: 3-methyl-2-oxobutanoate hydroxymethyltransferase (277 aa).

D43 and D82 together coordinate Mg(2+). 3-methyl-2-oxobutanoate is bound by residues D43–S44, D82, and K112. A Mg(2+)-binding site is contributed by E114. The Proton acceptor role is filled by E181.

It belongs to the PanB family. As to quaternary structure, homodecamer; pentamer of dimers. Requires Mg(2+) as cofactor.

It is found in the cytoplasm. It carries out the reaction 3-methyl-2-oxobutanoate + (6R)-5,10-methylene-5,6,7,8-tetrahydrofolate + H2O = 2-dehydropantoate + (6S)-5,6,7,8-tetrahydrofolate. Its pathway is cofactor biosynthesis; (R)-pantothenate biosynthesis; (R)-pantoate from 3-methyl-2-oxobutanoate: step 1/2. Its function is as follows. Catalyzes the reversible reaction in which hydroxymethyl group from 5,10-methylenetetrahydrofolate is transferred onto alpha-ketoisovalerate to form ketopantoate. The polypeptide is 3-methyl-2-oxobutanoate hydroxymethyltransferase (Listeria innocua serovar 6a (strain ATCC BAA-680 / CLIP 11262)).